A 410-amino-acid polypeptide reads, in one-letter code: Methylamine dehydrogenase heavy chain (410 aa).

Residues 1-35 form the signal peptide; the sequence is MTHAYTKVRQALCYGSATLGAAALAALIAAGSAAA.

This sequence belongs to the aromatic amine dehydrogenase heavy chain family. As to quaternary structure, tetramer of two light and two heavy chains.

The protein resides in the periplasm. It catalyses the reaction 2 oxidized [amicyanin] + methylamine + H2O = 2 reduced [amicyanin] + formaldehyde + NH4(+) + 2 H(+). Its function is as follows. Methylamine dehydrogenase carries out the oxidation of methylamine. Electrons are passed from methylamine dehydrogenase to amicyanin. In Methylorubrum extorquens (strain ATCC 14718 / DSM 1338 / JCM 2805 / NCIMB 9133 / AM1) (Methylobacterium extorquens), this protein is Methylamine dehydrogenase heavy chain (mauB).